The following is a 204-amino-acid chain: Large ribosomal subunit protein uL4 (204 aa).

A disordered region spans residues T49–S75.

Belongs to the universal ribosomal protein uL4 family. As to quaternary structure, part of the 50S ribosomal subunit.

One of the primary rRNA binding proteins, this protein initially binds near the 5'-end of the 23S rRNA. It is important during the early stages of 50S assembly. It makes multiple contacts with different domains of the 23S rRNA in the assembled 50S subunit and ribosome. In terms of biological role, forms part of the polypeptide exit tunnel. This chain is Large ribosomal subunit protein uL4, found in Campylobacter jejuni subsp. doylei (strain ATCC BAA-1458 / RM4099 / 269.97).